A 133-amino-acid chain; its full sequence is Salivary cystatin-L (133 aa).

Residues 1-19 form the signal peptide; sequence MTASFALVLLLGGVAVCIA. The 87-residue stretch at 29–115 folds into the Cystatin domain; it reads KANHQANPEY…VAQRTCTTVV (87 aa).

Belongs to the cystatin family. In terms of tissue distribution, salivary gland.

The protein localises to the secreted. In terms of biological role, inhibitor of cysteine proteinases. Inhibits host cathepsin L (CTSL) and S (CTSS). Modulates production of various cytokines and chemokines in lipopolysaccharide (LPS)-stimulated mouse dendritic cell. Suppresses maturation of mouse bone-marrow-derived dendritic cells (BMDCs). The polypeptide is Salivary cystatin-L (Ixodes persulcatus (Taiga tick)).